The primary structure comprises 126 residues: UPF0325 protein PBPRA2971 (126 aa).

The protein belongs to the UPF0325 family.

This Photobacterium profundum (strain SS9) protein is UPF0325 protein PBPRA2971.